We begin with the raw amino-acid sequence, 208 residues long: Non-specific lipid transfer protein GPI-anchored 4 (208 aa).

Residues 1-25 form the signal peptide; that stretch reads MKQSLLLSFVLLLLSSSSLVTPIHA. Residues N27, N67, and N105 are each glycosylated (N-linked (GlcNAc...) asparagine). 4 disulfide bridges follow: C48–C91, C58–C75, C76–C116, and C89–C125. Positions 136-181 are disordered; the sequence is GASPVSPSAGAPTTSPSAAKSPETSATSPSSDETPSMTAPSPSSSG. The GPI-anchor amidated serine moiety is linked to residue S179. Positions 180–208 are cleaved as a propeptide — removed in mature form; the sequence is SGTNILSVPALTIVFVIVSSVAYISAFSN.

This sequence belongs to the plant LTP family. As to expression, confined to the anthers and stamen of the inflorescence, especially in pollen.

The protein resides in the cell membrane. In terms of biological role, lipid transfer protein involved in seed and ovule maturation and development, probably by regulating the fatty acids homeostasis during suberin and sporopollenin biosynthesis or deposition. In Arabidopsis thaliana (Mouse-ear cress), this protein is Non-specific lipid transfer protein GPI-anchored 4.